The sequence spans 867 residues: Ent-copalyl diphosphate synthase 1, chloroplastic (867 aa).

The transit peptide at 1 to 35 (MIHLHSPPTAPAAFGGAGSADWRRRRRWSWSSSSR) directs the protein to the chloroplast. The tract at residues 1 to 134 (MIHLHSPPTA…ADEEADDELQ (134 aa)) is disordered. Positions 51–64 (RGGDDGGGEDHHAD) are enriched in basic and acidic residues. A compositionally biased stretch (low complexity) spans 74–89 (AWRARATTAGVSSSSS). Over residues 99-121 (IEHETPRITKWPNESRDLDDHQQ) the composition is skewed to basic and acidic residues. Over residues 124 to 133 (EADEEADDEL) the composition is skewed to acidic residues. K286 contributes to the substrate binding site. The DXDD motif signature appears at 418-421 (EVDD). Residue K504 participates in substrate binding.

The protein belongs to the terpene synthase family. It depends on Mg(2+) as a cofactor.

It is found in the plastid. Its subcellular location is the chloroplast. It carries out the reaction (2E,6E,10E)-geranylgeranyl diphosphate = ent-copalyl diphosphate. Its pathway is plant hormone biosynthesis; gibberellin biosynthesis. In terms of biological role, catalyzes the conversion of geranylgeranyl diphosphate to the gibberellin precursor ent-copalyl diphosphate. The polypeptide is Ent-copalyl diphosphate synthase 1, chloroplastic (CPS1) (Oryza sativa subsp. japonica (Rice)).